The sequence spans 190 residues: Endoribonuclease YbeY (190 aa).

Residues 1–25 (MSQPRPGHRPDCNGADPDSNFASMT) form a disordered region. Positions 147, 151, and 157 each coordinate Zn(2+).

The protein belongs to the endoribonuclease YbeY family. Zn(2+) is required as a cofactor.

Its subcellular location is the cytoplasm. Its function is as follows. Single strand-specific metallo-endoribonuclease involved in late-stage 70S ribosome quality control and in maturation of the 3' terminus of the 16S rRNA. In Rhodopseudomonas palustris (strain ATCC BAA-98 / CGA009), this protein is Endoribonuclease YbeY.